Consider the following 593-residue polypeptide: Dihydroxy-acid dehydratase (593 aa).

The segment covering 1 to 17 (MSQQTEPDDDAALDGDE) has biased composition (acidic residues). Residues 1–40 (MSQQTEPDDDAALDGDEPGAYGKDERLRSREVTEGPERAP) form a disordered region. Positions 22-40 (GKDERLRSREVTEGPERAP) are enriched in basic and acidic residues. A [2Fe-2S] cluster-binding site is contributed by C72. D104 is a binding site for Mg(2+). C145 is a [2Fe-2S] cluster binding site. Residues D146 and K147 each coordinate Mg(2+). K147 bears the N6-carboxylysine mark. C217 lines the [2Fe-2S] cluster pocket. E475 provides a ligand contact to Mg(2+). S501 acts as the Proton acceptor in catalysis.

This sequence belongs to the IlvD/Edd family. As to quaternary structure, homodimer. The cofactor is [2Fe-2S] cluster. Requires Mg(2+) as cofactor.

The enzyme catalyses (2R)-2,3-dihydroxy-3-methylbutanoate = 3-methyl-2-oxobutanoate + H2O. It catalyses the reaction (2R,3R)-2,3-dihydroxy-3-methylpentanoate = (S)-3-methyl-2-oxopentanoate + H2O. The protein operates within amino-acid biosynthesis; L-isoleucine biosynthesis; L-isoleucine from 2-oxobutanoate: step 3/4. Its pathway is amino-acid biosynthesis; L-valine biosynthesis; L-valine from pyruvate: step 3/4. Functions in the biosynthesis of branched-chain amino acids. Catalyzes the dehydration of (2R,3R)-2,3-dihydroxy-3-methylpentanoate (2,3-dihydroxy-3-methylvalerate) into 2-oxo-3-methylpentanoate (2-oxo-3-methylvalerate) and of (2R)-2,3-dihydroxy-3-methylbutanoate (2,3-dihydroxyisovalerate) into 2-oxo-3-methylbutanoate (2-oxoisovalerate), the penultimate precursor to L-isoleucine and L-valine, respectively. The protein is Dihydroxy-acid dehydratase of Natronomonas pharaonis (strain ATCC 35678 / DSM 2160 / CIP 103997 / JCM 8858 / NBRC 14720 / NCIMB 2260 / Gabara) (Halobacterium pharaonis).